The sequence spans 371 residues: 3-isopropylmalate dehydrogenase (371 aa).

T55 is modified (phosphothreonine). 78 to 89 (GPEWTNPNCRPE) serves as a coordination point for NAD(+). The substrate site is built by R96, R106, R135, and D224. Mg(2+) contacts are provided by D224, D249, and D253. Position 290–302 (290–302 (GSAPDIAGKGIVN)) interacts with NAD(+).

Belongs to the isocitrate and isopropylmalate dehydrogenases family. In terms of assembly, homodimer. Mg(2+) is required as a cofactor. The cofactor is Mn(2+).

Its subcellular location is the cytoplasm. The catalysed reaction is (2R,3S)-3-isopropylmalate + NAD(+) = 4-methyl-2-oxopentanoate + CO2 + NADH. It participates in amino-acid biosynthesis; L-leucine biosynthesis; L-leucine from 3-methyl-2-oxobutanoate: step 3/4. Functionally, catalyzes the oxidation of 3-carboxy-2-hydroxy-4-methylpentanoate (3-isopropylmalate) to 3-carboxy-4-methyl-2-oxopentanoate. The product decarboxylates to 4-methyl-2 oxopentanoate. The protein is 3-isopropylmalate dehydrogenase (leu1) of Schizosaccharomyces pombe (strain 972 / ATCC 24843) (Fission yeast).